Here is a 151-residue protein sequence, read N- to C-terminus: Large ribosomal subunit protein uL13 (151 aa).

This sequence belongs to the universal ribosomal protein uL13 family. As to quaternary structure, part of the 50S ribosomal subunit.

This protein is one of the early assembly proteins of the 50S ribosomal subunit, although it is not seen to bind rRNA by itself. It is important during the early stages of 50S assembly. The protein is Large ribosomal subunit protein uL13 of Picosynechococcus sp. (strain ATCC 27264 / PCC 7002 / PR-6) (Agmenellum quadruplicatum).